Here is a 170-residue protein sequence, read N- to C-terminus: Cytochrome b6-f complex subunit 4 (170 aa).

The next 3 helical transmembrane spans lie at 36-56, 95-115, and 131-151; these read LLYI…GLAV, LLGV…PFLE, and TVFL…TLPI.

Belongs to the cytochrome b family. PetD subfamily. As to quaternary structure, the 4 large subunits of the cytochrome b6-f complex are cytochrome b6, subunit IV (17 kDa polypeptide, petD), cytochrome f and the Rieske protein, while the 4 small subunits are petG, petL, petM and petN. The complex functions as a dimer.

The protein resides in the plastid. It localises to the chloroplast thylakoid membrane. Its function is as follows. Component of the cytochrome b6-f complex, which mediates electron transfer between photosystem II (PSII) and photosystem I (PSI), cyclic electron flow around PSI, and state transitions. The sequence is that of Cytochrome b6-f complex subunit 4 from Nymphaea alba (White water-lily).